The primary structure comprises 219 residues: ATP-dependent dethiobiotin synthetase BioD (219 aa).

12–17 contacts ATP; that stretch reads DLGKTH. Threonine 16 contributes to the Mg(2+) binding site. Residue lysine 37 is part of the active site. Serine 41 is a substrate binding site. Residues aspartate 52, 115–118, and 175–176 each bind ATP; these read EGAG and SE. Mg(2+)-binding residues include aspartate 52 and glutamate 115.

It belongs to the dethiobiotin synthetase family. Homodimer. The cofactor is Mg(2+).

It is found in the cytoplasm. It carries out the reaction (7R,8S)-7,8-diammoniononanoate + CO2 + ATP = (4R,5S)-dethiobiotin + ADP + phosphate + 3 H(+). The protein operates within cofactor biosynthesis; biotin biosynthesis; biotin from 7,8-diaminononanoate: step 1/2. Catalyzes a mechanistically unusual reaction, the ATP-dependent insertion of CO2 between the N7 and N8 nitrogen atoms of 7,8-diaminopelargonic acid (DAPA, also called 7,8-diammoniononanoate) to form a ureido ring. This chain is ATP-dependent dethiobiotin synthetase BioD, found in Caulobacter vibrioides (strain ATCC 19089 / CIP 103742 / CB 15) (Caulobacter crescentus).